Consider the following 175-residue polypeptide: Peptide deformylase (175 aa).

Fe cation is bound by residues Cys99 and His141. Residue Glu142 is part of the active site. Fe cation is bound at residue His145.

This sequence belongs to the polypeptide deformylase family. It depends on Fe(2+) as a cofactor.

The enzyme catalyses N-terminal N-formyl-L-methionyl-[peptide] + H2O = N-terminal L-methionyl-[peptide] + formate. Functionally, removes the formyl group from the N-terminal Met of newly synthesized proteins. Requires at least a dipeptide for an efficient rate of reaction. N-terminal L-methionine is a prerequisite for activity but the enzyme has broad specificity at other positions. The protein is Peptide deformylase of Rickettsia akari (strain Hartford).